The chain runs to 716 residues: Ubiquitin thioesterase zranb1-B (716 aa).

2 RanBP2-type zinc fingers span residues 3–33 (DLGLKWSCEYCTYENWPSAIKCTMCRAQRHN) and 82–111 (TSSKWSCHMCTYLNWPRAIRCTQCLSQRQQ). Zn(2+) is bound by residues Cys-10, Cys-13, Cys-24, Cys-27, Cys-88, Cys-91, Cys-102, and Cys-105. The tract at residues 113-143 (SQQHSPLSPSETPQTSGSRPSPVTSDPCEEY) is disordered. Residues 118–136 (PLSPSETPQTSGSRPSPVT) show a composition bias toward polar residues. Residues 152-181 (HAQRWPCSACTYENWPKSLRCVVCDHPKPS) form a RanBP2-type 3 zinc finger. Residues Cys-158, Cys-161, Cys-172, and Cys-175 each contribute to the Zn(2+) site. Positions 178 to 228 (PKPSGSPETPQQDSEAESATSPSIVNEQERENVRTAGGGGGGSRGRLRKLS) are disordered. The segment covering 183 to 203 (SPETPQQDSEAESATSPSIVN) has biased composition (polar residues). 2 ANK repeats span residues 268–298 (RRSDWLFLNACAGVVEGDLAAVEAYKSSGGD) and 321–348 (FTLVHLAIRFQRQDMLAVLLTEVSQQTA). In terms of domain architecture, OTU spans 440 to 600 (LYALWNRTAG…RGHFSALVAM (161 aa)). The active-site Nucleophile is Cys-451. The Proton acceptor role is filled by His-593.

It belongs to the peptidase C64 family.

The protein resides in the cytoplasm. It is found in the nucleus. It carries out the reaction Thiol-dependent hydrolysis of ester, thioester, amide, peptide and isopeptide bonds formed by the C-terminal Gly of ubiquitin (a 76-residue protein attached to proteins as an intracellular targeting signal).. Ubiquitin thioesterase, which specifically hydrolyzes 'Lys-29'-linked and 'Lys-33'-linked diubiquitin. Also cleaves 'Lys-63'-linked chains, but with 40-fold less efficiency compared to 'Lys-29'-linked ones. Positive regulator of the Wnt signaling pathway that deubiquitinates apc protein, a negative regulator of Wnt-mediated transcription. Acts as a regulator of autophagy by mediating deubiquitination of pik3c3/vps34, thereby promoting autophagosome maturation. Plays a role in the regulation of cell morphology and cytoskeletal organization. Required in the stress fiber dynamics and cell migration. The sequence is that of Ubiquitin thioesterase zranb1-B (zranb1b) from Danio rerio (Zebrafish).